Consider the following 430-residue polypeptide: Tol-Pal system protein TolB (430 aa).

Positions 1-21 (MKQALRVAFGFLMLWAAVLHA) are cleaved as a signal peptide.

This sequence belongs to the TolB family. As to quaternary structure, the Tol-Pal system is composed of five core proteins: the inner membrane proteins TolA, TolQ and TolR, the periplasmic protein TolB and the outer membrane protein Pal. They form a network linking the inner and outer membranes and the peptidoglycan layer.

The protein localises to the periplasm. Its function is as follows. Part of the Tol-Pal system, which plays a role in outer membrane invagination during cell division and is important for maintaining outer membrane integrity. TolB occupies a key intermediary position in the Tol-Pal system because it communicates directly with both membrane-embedded components, Pal in the outer membrane and TolA in the inner membrane. In Salmonella typhi, this protein is Tol-Pal system protein TolB.